The sequence spans 244 residues: tRNA pseudouridine synthase A (244 aa).

Aspartate 52 serves as the catalytic Nucleophile. Position 110 (tyrosine 110) interacts with substrate.

This sequence belongs to the tRNA pseudouridine synthase TruA family. In terms of assembly, homodimer.

The enzyme catalyses uridine(38/39/40) in tRNA = pseudouridine(38/39/40) in tRNA. Functionally, formation of pseudouridine at positions 38, 39 and 40 in the anticodon stem and loop of transfer RNAs. In Pelobacter propionicus (strain DSM 2379 / NBRC 103807 / OttBd1), this protein is tRNA pseudouridine synthase A.